We begin with the raw amino-acid sequence, 2162 residues long: Calpain-type cysteine protease ADL1 (2162 aa).

The signal sequence occupies residues 1-33 (MEEEEHRGVVLVCSICGFLFAVLGPLSFWILWA). Residues 34 to 70 (VNWRPWRLYSWIYARKWPAYVQGPQLSTLCSFFTLFA) are Extracellular-facing. Residues 71–91 (WLVVVSPITVLLVWGGILIAL) traverse the membrane as a helical segment. Residues 92-95 (LERN) lie on the Cytoplasmic side of the membrane. A helical membrane pass occupies residues 96-116 (IIGLAVIMVGVALLLSFYSIM). The Extracellular segment spans residues 117–127 (LWWRTQWQSSK). Residues 128-148 (AVAYLLLLAVGLLCAYEFCAV) traverse the membrane as a helical segment. At 149 to 164 (YVTTGASASELNSPSG) the chain is on the cytoplasmic side. The chain crosses the membrane as a helical span at residues 165–185 (FFFGVSAISLAINMLFISKIL). Residues 186–236 (FNGSGFDVDEYVRRLYKFAYSDCVEVAPVSCSPDPPDPSELYMTKSSRVLH) lie on the Extracellular side of the membrane. The chain crosses the membrane as a helical span at residues 237–257 (LGLLYLCSLMVLVVYSILYGL). Topologically, residues 258 to 264 (TSKEARW) are cytoplasmic. A helical membrane pass occupies residues 265–285 (LGALTSVAVVILDWNLGLCSF). Over 286–294 (RFELLKSRM) the chain is Extracellular. The chain crosses the membrane as a helical span at residues 295 to 315 (IALFVAGTSRVFLICFGVHYW). Residues 316–320 (YLGHC) lie on the Cytoplasmic side of the membrane. A helical membrane pass occupies residues 321–341 (ISYAFVASVLLAAAVSCWLSI). At 342–626 (SNPSVARIDA…LMFHQVAGSP (285 aa)) the chain is on the extracellular side. Positions 366–403 (KGQTSSSNSSDGCGSSVKRSSGSVEAGPHGNATDSMYR) are disordered. Over residues 370–381 (SSSNSSDGCGSS) the composition is skewed to low complexity. The helical transmembrane segment at 627–647 (IRAFVVFTLIFIIETVTVAVH) threads the bilayer. Topologically, residues 648–663 (RPKPIKVINATHEQFE) are cytoplasmic. A helical membrane pass occupies residues 664 to 684 (FGFSILLLSPVVCSIMAFIWS). The Extracellular portion of the chain corresponds to 685–697 (LCAEEMTMTSKPR). Residues 698–718 (KYGFIAWLLSTCVGLLLSFLS) form a helical membrane-spanning segment. Over 719 to 722 (KSSV) the chain is Cytoplasmic. A helical transmembrane segment spans residues 723–743 (ILGLSLTVPLMVACLSFAIPI). At 744–773 (WMRNGYRFWIPGGELDSRENIRQAPGKKER) the chain is on the extracellular side. A helical membrane pass occupies residues 774 to 794 (ALFAISITVFTASVIGLGAIV). At 795–825 (SAKPLDALGYKGWDADKKSFYSPYATSMYLG) the chain is on the cytoplasmic side. The chain crosses the membrane as a helical span at residues 826 to 846 (WALSSTIAVLATGVIPIVAWF). Residues 847–856 (ATYRFSPSSA) lie on the Extracellular side of the membrane. A helical transmembrane segment spans residues 857-877 (ICVGLFATVLVSFCGVSYWGV). Topologically, residues 878-890 (VNSRQDGVPLKAD) are cytoplasmic. A helical membrane pass occupies residues 891 to 911 (FLAALLPLLCIPAVFSLFTGM). The Extracellular segment spans residues 912–924 (YKWKDDDWKISRG). Residues 925 to 945 (VYLFVGMGVLLLLGAISAVIV) form a helical membrane-spanning segment. Residues 946–949 (TIRP) lie on the Cytoplasmic side of the membrane. A helical transmembrane segment spans residues 950-970 (WTVGVACLLVILFLVFAIGVI). Residues 971–984 (HYWTSNNFYLTRTQ) are Extracellular-facing. A helical transmembrane segment spans residues 985 to 1005 (MLLVCSLAFLLALAAFLMGLF). Topologically, residues 1006-1019 (QEKPFVGASIGYFS) are cytoplasmic. A helical transmembrane segment spans residues 1020 to 1040 (FLFLLTGRALTVLLSPPIVVY). Over 1041–1063 (SPRVLPVYVYDAHADSAKNVSYA) the chain is Extracellular. Residues 1064–1084 (FLILYGIALATEVWGVIASLI) form a helical membrane-spanning segment. The Cytoplasmic portion of the chain corresponds to 1085–2162 (LNPPFIGAAI…TKAPIKLEAV (1078 aa)). Phosphoserine is present on residues Ser-1372 and Ser-1377. A Calpain catalytic 1 domain is found at 1418–1611 (TGRHCGEIDL…ICSAEYGLFD (194 aa)). At Ser-1668 the chain carries Phosphoserine. The Calpain catalytic 2 domain maps to 1706 to 2008 (NFTDQEFPPD…FRSIYVCRVY (303 aa)). Catalysis depends on residues Cys-1772, His-1930, and Asn-1950.

This sequence belongs to the peptidase C2 family. Post-translationally, autocatalytic proteolytic cleavage leading to the production of mainly cytoplasmic localized subproducts of about 85 and 120 kDa. As to expression, ubiquitously expressed with higher levels in embryos, vasculatures, leaf primordia, leaf margins, and shoot apical meristem (SAM).

It is found in the endoplasmic reticulum membrane. The protein resides in the cytoplasm. The protein localises to the cell membrane. Its subcellular location is the endosome membrane. In terms of biological role, essential protease involved in epiderm development. Required for aleurone cell development in the endosperm probably by maintaining and restricting the aleurone and embryonic epidermal L1 cell-layer fates as well as meristems organization. Involved in the maintenance of adaxial/abaxial axis information in developing leaves, probably by regulating cell proliferation and expansion. Does not need calcium ions to be active. The sequence is that of Calpain-type cysteine protease ADL1 (ADL1) from Oryza sativa subsp. japonica (Rice).